Here is a 432-residue protein sequence, read N- to C-terminus: CinA-like protein (432 aa).

It belongs to the CinA family.

In Colwellia psychrerythraea (strain 34H / ATCC BAA-681) (Vibrio psychroerythus), this protein is CinA-like protein.